The sequence spans 81 residues: Photosystem I iron-sulfur center (81 aa).

2 consecutive 4Fe-4S ferredoxin-type domains span residues 2 to 31 and 39 to 68; these read SHSVKIYDTCIGCTQCVRACPTDVLEMIPW and IASAPRTEDCVGCKRCESACPTDFLSVRVY. C11, C14, C17, C21, C48, C51, C54, and C58 together coordinate [4Fe-4S] cluster.

In terms of assembly, the eukaryotic PSI reaction center is composed of at least 11 subunits. The cofactor is [4Fe-4S] cluster.

It localises to the plastid thylakoid membrane. The catalysed reaction is reduced [plastocyanin] + hnu + oxidized [2Fe-2S]-[ferredoxin] = oxidized [plastocyanin] + reduced [2Fe-2S]-[ferredoxin]. In terms of biological role, apoprotein for the two 4Fe-4S centers FA and FB of photosystem I (PSI); essential for photochemical activity. FB is the terminal electron acceptor of PSI, donating electrons to ferredoxin. The C-terminus interacts with PsaA/B/D and helps assemble the protein into the PSI complex. Required for binding of PsaD and PsaE to PSI. PSI is a plastocyanin-ferredoxin oxidoreductase, converting photonic excitation into a charge separation, which transfers an electron from the donor P700 chlorophyll pair to the spectroscopically characterized acceptors A0, A1, FX, FA and FB in turn. This Cuscuta gronovii (Common dodder) protein is Photosystem I iron-sulfur center.